A 526-amino-acid polypeptide reads, in one-letter code: Exodeoxyribonuclease 7 large subunit (526 aa).

A disordered region spans residues G496–F526.

It belongs to the XseA family. As to quaternary structure, heterooligomer composed of large and small subunits.

Its subcellular location is the cytoplasm. The catalysed reaction is Exonucleolytic cleavage in either 5'- to 3'- or 3'- to 5'-direction to yield nucleoside 5'-phosphates.. Functionally, bidirectionally degrades single-stranded DNA into large acid-insoluble oligonucleotides, which are then degraded further into small acid-soluble oligonucleotides. In Rhizobium etli (strain CIAT 652), this protein is Exodeoxyribonuclease 7 large subunit.